Consider the following 122-residue polypeptide: Large ribosomal subunit protein uL14 (122 aa).

This sequence belongs to the universal ribosomal protein uL14 family. Part of the 50S ribosomal subunit. Forms a cluster with proteins L3 and L19. In the 70S ribosome, L14 and L19 interact and together make contacts with the 16S rRNA in bridges B5 and B8.

Functionally, binds to 23S rRNA. Forms part of two intersubunit bridges in the 70S ribosome. In Streptomyces griseus subsp. griseus (strain JCM 4626 / CBS 651.72 / NBRC 13350 / KCC S-0626 / ISP 5235), this protein is Large ribosomal subunit protein uL14.